A 1287-amino-acid polypeptide reads, in one-letter code: Rho GTPase-activating protein 33 (1287 aa).

Residues 1 to 40 (MVARSTDSLDGPGEGSVQPLPTAGGPSVKGKPGKRLSAPR) form a disordered region. Ser8 bears the Phosphoserine mark. The PX; atypical domain maps to 59 to 168 (FGHIQLLLSP…CGPVLTWMEL (110 aa)). Residues 186–248 (PAVAAAHVIK…PSECVELFTE (63 aa)) form the SH3 domain. A Rho-GAP domain is found at 315 to 510 (CDLGEHLSNS…FLLTHVDVLF (196 aa)). 6 disordered regions span residues 551–792 (RTQG…SPAA), 813–832 (AGGA…GRSL), 859–1030 (KLRG…VPTP), 1056–1075 (GPPS…SLGP), 1090–1134 (GASE…SPDF), and 1146–1287 (PPDH…RSYC). A compositionally biased stretch (low complexity) spans 558-571 (TPTEPTTPKAPASP). A Phosphoserine modification is found at Ser570. Residues 572–584 (AERRKGERGEKQR) show a composition bias toward basic and acidic residues. Positions 622 to 645 (SGSRPDTVTLRSAKSEESLSSQAS) are enriched in polar residues. A Phosphoserine modification is found at Ser636. Low complexity predominate over residues 672 to 709 (AGSCESLSSSSSSESSSSESSSSSSESSAAGLGALSGS). Ser727 bears the Phosphoserine mark. The segment covering 752–766 (PGDPAPPASPAPPAP) has biased composition (pro residues). 2 stretches are compositionally biased toward low complexity: residues 813–829 (AGGA…LSPG) and 896–919 (PARL…SQQE). Polar residues-rich tracts occupy residues 972–981 (RQQSDGSLLR) and 1019–1028 (SPCSVPSQVP). The residue at position 1169 (Tyr1169) is a Phosphotyrosine. The segment covering 1175–1189 (GPRGPSPASSSSSSP) has biased composition (low complexity). Arg1244 carries the omega-N-methylarginine modification. Residues 1274 to 1287 (SWSLHSEGQTRSYC) show a composition bias toward polar residues.

It belongs to the PX domain-containing GAP family. As to quaternary structure, specifically interacts with CDC42 and RHOQ/TC10 through its Rho-GAP domain. Interacts with NEK6.

May be involved in several stages of intracellular trafficking. Could play an important role in the regulation of glucose transport by insulin. May act as a downstream effector of RHOQ/TC10 in the regulation of insulin-stimulated glucose transport. The sequence is that of Rho GTPase-activating protein 33 (ARHGAP33) from Homo sapiens (Human).